Here is a 466-residue protein sequence, read N- to C-terminus: MLRSTSTVTLFSGGGAKSPGTPSRRANVCRLRLTVPPENPVPQQTEKKIERKDQPPELSNGESTKRLPQGVVYGVVRRSDPNQQKEMVVYGWSTNQLKEEMNYIKDVRATLEKVRKRMYGDYDEMRQKIRQLTQDLSVSHAQQDYLDSHIQAQASALDSFNAMNAALASDSVGLQKTLVDVTLENSHIKDQIRHLQQTYEASMDKLREKQRQLEAAQMENQLLKMRVESSQEANAEVMREMTRKLYSQYEEKLQEAQRKHSAEKEVLLEETNSFLKAIEEANKKMEAAELSLEEKDQKIGELDRLIERMEKERHQLQLQLLEHETEMSGEMADSDKNRYQQLEEASASLRERIRHLDDMVHCQQKKVKQMVEEIESLKKKVQQKQLLILQLLEKISFLEGENNELQSRLDYLTETQPKTEVETREIGVGCDLLPSPTGRTREITMPSRSYTPYTRVLELSSKKTLT.

A compositionally biased stretch (polar residues) spans 1–10 (MLRSTSTVTL). An N-terminal signal peptide occupies residues 1–16 (MLRSTSTVTLFSGGGA). A disordered region spans residues 1–68 (MLRSTSTVTL…SNGESTKRLP (68 aa)). Residues 45 to 55 (TEKKIERKDQP) show a composition bias toward basic and acidic residues. 2 coiled-coil regions span residues 95-137 (NQLK…QDLS) and 187-415 (HIKD…LTET).

It belongs to the MYZAP family. As to quaternary structure, interacts with DSP, MPRIP and TJP1/ZO1. Interaction with MPRIP inhibits the activation of transcription factor SRF. Interacts with GRIN1. Interacts with DYNLL1. As to expression, detected in heart myocardium and lung.

It is found in the cytoplasm. It localises to the cytoskeleton. Its subcellular location is the cell membrane. The protein localises to the myofibril. The protein resides in the sarcomere. It is found in the i band. It localises to the z line. Its subcellular location is the cell junction. Its function is as follows. Plays a role in cellular signaling via Rho-related GTP-binding proteins and activation of transcription factor SRF. Targets TJP1 to cell junctions. In cortical neurons, may play a role in glutaminergic signal transduction through interaction with the NMDA receptor subunit GRIN1. This is Myocardial zonula adherens protein (Myzap) from Mus musculus (Mouse).